The primary structure comprises 153 residues: DNA gyrase inhibitor (153 aa).

This sequence belongs to the DNA gyrase inhibitor family. As to quaternary structure, interacts with DNA gyrase.

The protein resides in the cytoplasm. In terms of biological role, inhibits the supercoiling activity of DNA gyrase. Acts by inhibiting DNA gyrase at an early step, prior to (or at the step of) binding of DNA by the gyrase. It protects cells against toxins that target DNA gyrase, by inhibiting activity of these toxins and reducing the formation of lethal double-strand breaks in the cell. The sequence is that of DNA gyrase inhibitor from Pantoea sp. (strain At-9b).